The chain runs to 381 residues: E3 ubiquitin-protein ligase KCMF1 (381 aa).

N-acetylserine is present on Ser2. Ser2 is subject to Phosphoserine. A ZZ-type zinc finger spans residues His4–Asp60. The Zn(2+) site is built by Cys9, Cys12, Cys24, Cys27, Cys33, Cys36, His46, and His50. A C2H2-type zinc finger spans residues Phe78–His101. The disordered stretch occupies residues Met154 to Glu194. Phosphoserine occurs at positions 169, 189, and 212. Over residues Ser175–Ser192 the composition is skewed to low complexity. Residues Ala224–Asn259 adopt a coiled-coil conformation. A phosphoserine mark is found at Ser335 and Ser336.

The protein belongs to the KCMF1 family. Component of the SIFI complex, composed of KCMF1, UBR4 and calmodulin (CALM1, CALM2 or CALM3). As to expression, testis, liver, kidney, heart and skeletal muscle.

The protein resides in the cytoplasm. It localises to the late endosome. Its subcellular location is the lysosome. The catalysed reaction is S-ubiquitinyl-[E2 ubiquitin-conjugating enzyme]-L-cysteine + [acceptor protein]-L-lysine = [E2 ubiquitin-conjugating enzyme]-L-cysteine + N(6)-ubiquitinyl-[acceptor protein]-L-lysine.. It participates in protein modification; protein ubiquitination. In terms of biological role, E3 ubiquitin-protein ligase which accepts ubiquitin from an E2 ubiquitin-conjugating enzyme and then transfers it to targeted substrates, promoting their degradation by the proteasome. Together with UBR4, component of the N-end rule pathway: ubiquitinates proteins bearing specific N-terminal residues that are destabilizing according to the N-end rule, leading to their degradation. Does not ubiquitinate proteins that are acetylated at the N-terminus. Together with UBR4, part of a protein quality control pathway that catalyzes ubiquitination and degradation of proteins that have been oxidized in response to reactive oxygen species (ROS): recognizes proteins with an Arg-CysO3(H) degron at the N-terminus, and mediates assembly of heterotypic 'Lys-63'-/'Lys-27'-linked branched ubiquitin chains on oxidized proteins, leading to their degradation by autophagy. Catalytic component of the SIFI complex, a multiprotein complex required to inhibit the mitochondrial stress response after a specific stress event has been resolved: ubiquitinates and degrades (1) components of the HRI-mediated signaling of the integrated stress response, such as DELE1 and EIF2AK1/HRI, as well as (2) unimported mitochondrial precursors. Within the SIFI complex, UBR4 initiates ubiquitin chain that are further elongated or branched by KCMF1. This Mus musculus (Mouse) protein is E3 ubiquitin-protein ligase KCMF1.